Consider the following 205-residue polypeptide: MIGKLKGVVDSYGEDFVILDVHGVGYVVHCSARTLQRLPPVGEAADLAIETHVREDMIRLYGFRSDAEREWFRLLQTVQGVGTRVALGVLSVLEPADLATAIATGDKGAIARAPGVGPRLAARLVAELKDKAPAFAPVDPALIRLAGAVEERTAPQPVADAISALVNLGYPQIQASAAVAAALQGAGEGAEAKTLIRLGLRELAR.

The interval 1–64 is domain I; sequence MIGKLKGVVD…EDMIRLYGFR (64 aa). The domain II stretch occupies residues 65–143; that stretch reads SDAEREWFRL…AFAPVDPALI (79 aa). Positions 144-152 are flexible linker; that stretch reads RLAGAVEER. Residues 153 to 205 form a domain III region; sequence TAPQPVADAISALVNLGYPQIQASAAVAAALQGAGEGAEAKTLIRLGLRELAR.

The protein belongs to the RuvA family. In terms of assembly, homotetramer. Forms an RuvA(8)-RuvB(12)-Holliday junction (HJ) complex. HJ DNA is sandwiched between 2 RuvA tetramers; dsDNA enters through RuvA and exits via RuvB. An RuvB hexamer assembles on each DNA strand where it exits the tetramer. Each RuvB hexamer is contacted by two RuvA subunits (via domain III) on 2 adjacent RuvB subunits; this complex drives branch migration. In the full resolvosome a probable DNA-RuvA(4)-RuvB(12)-RuvC(2) complex forms which resolves the HJ.

The protein localises to the cytoplasm. The RuvA-RuvB-RuvC complex processes Holliday junction (HJ) DNA during genetic recombination and DNA repair, while the RuvA-RuvB complex plays an important role in the rescue of blocked DNA replication forks via replication fork reversal (RFR). RuvA specifically binds to HJ cruciform DNA, conferring on it an open structure. The RuvB hexamer acts as an ATP-dependent pump, pulling dsDNA into and through the RuvAB complex. HJ branch migration allows RuvC to scan DNA until it finds its consensus sequence, where it cleaves and resolves the cruciform DNA. The polypeptide is Holliday junction branch migration complex subunit RuvA (Methylobacterium nodulans (strain LMG 21967 / CNCM I-2342 / ORS 2060)).